Consider the following 137-residue polypeptide: Glutamate mutase sigma subunit (137 aa).

In terms of domain architecture, B12-binding spans Lys3–Glu137. Adenosylcob(III)alamin-binding positions include Ser13–Ala17, His16, Ser61–Leu63, and Asn93–Gly97.

It belongs to the methylaspartate mutase GlmS subunit family. As to quaternary structure, heterotetramer composed of 2 epsilon subunits (GlmE) and 2 sigma subunits (GlmS). GlmE exists as a homodimer and GlmS as a monomer. Adenosylcob(III)alamin is required as a cofactor.

The catalysed reaction is (2S,3S)-3-methyl-L-aspartate = L-glutamate. It functions in the pathway amino-acid degradation; L-glutamate degradation via mesaconate pathway; acetate and pyruvate from L-glutamate: step 1/4. Competitively inhibited by (2S,4S)-4-fluoroglutamate, 2-methyleneglutarate, (2R,3RS)-3-fluoroglutamate and (S)-3-methylitaconate. In terms of biological role, catalyzes the carbon skeleton rearrangement of L-glutamate to L-threo-3-methylaspartate ((2S,3S)-3-methylaspartate). The sequence is that of Glutamate mutase sigma subunit from Clostridium cochlearium.